Here is a 134-residue protein sequence, read N- to C-terminus: Protein PsiB (134 aa).

Functionally, could be involved directly or indirectly in exopolysaccharide synthesis. The protein is Protein PsiB (psiB) of Rhizobium leguminosarum bv. phaseoli.